A 65-amino-acid polypeptide reads, in one-letter code: MGQKTALGSLLKSIGNSGQGKVVPGWGAVPVMAFIGVLLLVFLVIMLQIYNQSLLLQGFSVDWNG.

The helical transmembrane segment at 27–47 threads the bilayer; that stretch reads GAVPVMAFIGVLLLVFLVIML.

Belongs to the PsbH family. PSII is composed of 1 copy each of membrane proteins PsbA, PsbB, PsbC, PsbD, PsbE, PsbF, PsbH, PsbI, PsbJ, PsbK, PsbL, PsbM, PsbT, PsbX, PsbY, Psb30/Ycf12, peripheral proteins PsbO, CyanoQ (PsbQ), PsbU, PsbV and a large number of cofactors. It forms dimeric complexes.

The protein localises to the cellular thylakoid membrane. Functionally, one of the components of the core complex of photosystem II (PSII), required for its stability and/or assembly. PSII is a light-driven water:plastoquinone oxidoreductase that uses light energy to abstract electrons from H(2)O, generating O(2) and a proton gradient subsequently used for ATP formation. It consists of a core antenna complex that captures photons, and an electron transfer chain that converts photonic excitation into a charge separation. The chain is Photosystem II reaction center protein H from Prochlorococcus marinus (strain NATL1A).